Here is a 389-residue protein sequence, read N- to C-terminus: Ankyrin repeat domain-containing protein 42 (389 aa).

The interval 1–21 is disordered; the sequence is MPGVANSGPSTSSRETANPCS. Over residues 7-19 the composition is skewed to polar residues; it reads SGPSTSSRETANP. 9 ANK repeats span residues 25-60, 64-93, 97-126, 130-159, 163-192, 200-232, 235-265, 269-298, and 302-332; these read VHFGSIHDAVRAGDVKQLSEIVCLHWLLWHGADITH, RGWTASHIAAIRGQDACVQALIMNGANLTA, RGCTPLHLAATHGHSFTLQIMLRSGVDPSV, REWRPVHYAAFHGRLGCLQLLVKWGCSIED, NGNLPVHLAAMEGHLHCFKFLVSRMSSATQ, NGENVLDLAQRFFKQNILQFIQGAEYEGKDLED, TLAFPGHVAAFKGDLGMLKKLVEDGVININE, NGSTPMHKAAGQGHIECLQWLIKMGADSNI, and AGERPSDVAKRFAHLAAVKLLEELQKYDIDD.

In Homo sapiens (Human), this protein is Ankyrin repeat domain-containing protein 42 (ANKRD42).